Reading from the N-terminus, the 635-residue chain is Extracellular metalloproteinase MEP (635 aa).

Positions Met1–Ala19 are cleaved as a signal peptide. Positions His20 to His242 are excised as a propeptide. Residue His428 coordinates Zn(2+). Glu429 is an active-site residue. A Zn(2+)-binding site is contributed by His432. Residue Asn473 is glycosylated (N-linked (GlcNAc...) asparagine).

Belongs to the peptidase M36 family. The cofactor is Zn(2+).

It is found in the secreted. In terms of biological role, secreted metalloproteinase that allows assimilation of proteinaceous substrates. The sequence is that of Extracellular metalloproteinase MEP (MEP) from Pyricularia oryzae (strain 70-15 / ATCC MYA-4617 / FGSC 8958) (Rice blast fungus).